The sequence spans 411 residues: S-adenosylmethionine synthase (411 aa).

H15 is a binding site for ATP. D17 contacts Mg(2+). Residue E43 coordinates K(+). L-methionine-binding residues include E56 and Q99. The flexible loop stretch occupies residues Q99–T109. ATP is bound by residues D174 to K176, R247 to F248, D256, R262 to K263, A279, and K283. D256 contacts L-methionine. K287 contacts L-methionine.

Belongs to the AdoMet synthase family. In terms of assembly, homotetramer; dimer of dimers. The cofactor is Mg(2+). K(+) serves as cofactor.

It localises to the cytoplasm. It carries out the reaction L-methionine + ATP + H2O = S-adenosyl-L-methionine + phosphate + diphosphate. The protein operates within amino-acid biosynthesis; S-adenosyl-L-methionine biosynthesis; S-adenosyl-L-methionine from L-methionine: step 1/1. Catalyzes the formation of S-adenosylmethionine (AdoMet) from methionine and ATP. The overall synthetic reaction is composed of two sequential steps, AdoMet formation and the subsequent tripolyphosphate hydrolysis which occurs prior to release of AdoMet from the enzyme. This is S-adenosylmethionine synthase from Streptomyces spectabilis.